We begin with the raw amino-acid sequence, 595 residues long: MAETDIAMPESTPVDSRPAFAIVEELKTKFGENFYVQTTCEEFPTVWVERSRVQEVLMFLRKVDRPYVMLFDLSAMDERLRVHRDGLPASDFTVFYHLLSLERNSDIRIKVALNESDLNIPTATNIWPNANWYEREAYDMFGINFEGHPMLRRILLPTYWEGHPLRKEYSARATEYTPYMQNQAKQDFEQEHLRFVPEDWGLKRGNADEDFMFLNLGPNHPSAHGAFRVVLQLDGEEVKDCVPDIGYHHRGVEKMAERQTWHSFIPYTDRVDYLGGCAQNMPYVMAVEQLAGIKVPERAQVIRVMLNELFRINNHLLFCGTAIQDAGGMTPVFYMFADRQKVYDIVEAITGYRMHPAWFRIGGTAHDLPNNWHKLVKELLEWMPKRLNEYHTAALKNSVFIGRTRNVAQYDAKSALAWGVTGTGLRATGIDFDVRKYRPYSGYENFDFDVPLEYEGDAYARVMVHFREITESLKIIQQCLDNMPSGPYKADHPLAVPPPKDKTLQDIETLITHFLSVSWGPVMPAGEASFMTEVVKGASTYYLTSDKSTMSYRTRIRTPTFTHLQQMPSVINGSLVSDLIIYLATIDVVMADVDR.

Residues methionine 1–glutamine 186 are NADH dehydrogenase I subunit C. The tract at residues aspartate 210 to arginine 595 is NADH dehydrogenase I subunit D.

It in the N-terminal section; belongs to the complex I 30 kDa subunit family. In the C-terminal section; belongs to the complex I 49 kDa subunit family. NDH-1 is composed of 13 different subunits. Subunits NuoB, CD, E, F, and G constitute the peripheral sector of the complex.

The protein resides in the cell inner membrane. It catalyses the reaction a quinone + NADH + 5 H(+)(in) = a quinol + NAD(+) + 4 H(+)(out). NDH-1 shuttles electrons from NADH, via FMN and iron-sulfur (Fe-S) centers, to quinones in the respiratory chain. The immediate electron acceptor for the enzyme in this species is believed to be ubiquinone. Couples the redox reaction to proton translocation (for every two electrons transferred, four hydrogen ions are translocated across the cytoplasmic membrane), and thus conserves the redox energy in a proton gradient. This Acinetobacter baylyi (strain ATCC 33305 / BD413 / ADP1) protein is NADH-quinone oxidoreductase subunit C/D.